Here is a 190-residue protein sequence, read N- to C-terminus: MKKFLFKQKFCESLPKSFSKTLLALSLGLILLGIFAPFPKVPKQPSVPLMFHFTEHYARFIPTILSVAIPLIQRDAVGLFQVANASIATTLLTHTTKRALNHVTINDQRLGERPYGGNFNMPSGHSSMVGLAVAFLMRRYSFKKYFWLLPLVPLTMLARIYLDMHTIGAVLTGLGVGMLCVSLFTSPKKP.

5 helical membrane-spanning segments follow: residues 22–42 (LLALSLGLILLGIFAPFPKVP), 60–80 (FIPTILSVAIPLIQRDAVGLF), 117–137 (GNFNMPSGHSSMVGLAVAFLM), 145–162 (YFWLLPLVPLTMLARIYL), and 164–184 (MHTIGAVLTGLGVGMLCVSLF).

It belongs to the lipid A LpxE 1-phosphatase family. Does not require divalent cations. serves as cofactor.

Its subcellular location is the cell inner membrane. The protein operates within bacterial outer membrane biogenesis; LPS lipid A biosynthesis. Removes the 1-phosphate group from tetra- and probably hexaacylated lipid A species, has no requirement for the Kdo moiety of lipid A. Has no 4'-phosphatase activity. Has no activity on phospholipids (phosphatidylglycerol, phosphatidylethanolamine or cardiolipin). This enzyme has to act before EptA can attach phosphoethanolamine to the 1-position of lipid A. Absence of the 1-phosphate group renders the bacteria partially resistant to host-derived cationic antimicrobial peptides (CAMP), allowing it to camouflage itself from the host innate immune response, and plays a role in the long-term colonization of the host's stomach. The polypeptide is Lipid A 1-phosphatase (Helicobacter pylori (strain ATCC 700392 / 26695) (Campylobacter pylori)).